We begin with the raw amino-acid sequence, 1435 residues long: Protein SPP41 (1435 aa).

Disordered regions lie at residues 16–74 (VGNL…NIEI), 88–265 (VANA…ENTL), 286–309 (AKQT…VEAQ), 322–424 (ELLS…DDEF), 442–482 (ETST…DSLD), 519–708 (SVSD…MKVP), and 934–972 (QQLD…AGHT). Over residues 27–42 (GQEEGEVQGGEQEGDD) the composition is skewed to acidic residues. 3 stretches are compositionally biased toward basic and acidic residues: residues 53–63 (IEPKHPDDSQH), 98–127 (EQAK…KEQQ), and 139–154 (LKSD…ERRV). The 20-residue stretch at 171-190 (QDDENLRMAILESLQELNTN) folds into the UIM domain. Residues 196–205 (EPEKHEHAAP) are compositionally biased toward basic and acidic residues. The segment covering 211-223 (SKKSSKKKKKDKS) has biased composition (basic residues). Residues 224–234 (KNRESSKDKSS) show a composition bias toward basic and acidic residues. Residues 235–249 (KKSKSSSHSKKHAKD) are compositionally biased toward basic residues. The segment covering 286–301 (AKQTVDIQDNSHTDNT) has biased composition (polar residues). Residues 345-355 (KAVEPPRKPTA) are compositionally biased toward basic and acidic residues. The span at 367–383 (KPKKRPPQEKKKTKSKT) shows a compositional bias: basic residues. A compositionally biased stretch (low complexity) spans 384 to 398 (SKAASTANKSPASES). Composition is skewed to polar residues over residues 442–451 (ETSTHTATQD) and 459–482 (DFTS…DSLD). Composition is skewed to basic and acidic residues over residues 524-548 (LPHD…EKKT), 610-628 (KNKE…AREE), and 637-652 (KQRL…KIVE). Over residues 665–674 (KSGKPKKPYR) the composition is skewed to basic residues. Basic and acidic residues predominate over residues 676–691 (WTPEELLKRSQEAEKP). Positions 683–699 (KRSQEAEKPRKVKKERK) match the Nuclear localization signal motif. The segment covering 692-706 (RKVKKERKKKEKKMK) has biased composition (basic residues). Lysine 981 participates in a covalent cross-link: Glycyl lysine isopeptide (Lys-Gly) (interchain with G-Cter in SUMO). The segment covering 1005-1014 (KLELTKRAES) has biased composition (basic and acidic residues). The disordered stretch occupies residues 1005–1125 (KLELTKRAES…DSVNTTTGKP (121 aa)). The residue at position 1014 (serine 1014) is a Phosphoserine. A compositionally biased stretch (polar residues) spans 1021–1032 (NVETAKETQSVQ). Composition is skewed to basic and acidic residues over residues 1033-1082 (EIKE…EKIA) and 1091-1103 (LSDK…KSTL). At serine 1067 the chain carries Phosphoserine. A compositionally biased stretch (polar residues) spans 1108 to 1123 (AQLTGNEPDSVNTTTG). Residue lysine 1154 forms a Glycyl lysine isopeptide (Lys-Gly) (interchain with G-Cter in SUMO) linkage.

Interacts with PRP8 and RAP1.

The protein localises to the nucleus. In terms of biological role, negative regulator of PRP3 and PRP4 genes. In Saccharomyces cerevisiae (strain ATCC 204508 / S288c) (Baker's yeast), this protein is Protein SPP41 (SPP41).